The primary structure comprises 121 residues: MDQFIQLVEASQVRNDLPDIHPGDTVKLQLKVIEGEKERLQAFEGVIISDKGMGTSKTITVRKISNGVGVERIIPLCSPNIESITVLRKGKTRRAKLSYLRKRTGKAALKVKERKVFTPSK.

Belongs to the bacterial ribosomal protein bL19 family.

In terms of biological role, this protein is located at the 30S-50S ribosomal subunit interface and may play a role in the structure and function of the aminoacyl-tRNA binding site. This is Large ribosomal subunit protein bL19 from Chlorobium phaeobacteroides (strain BS1).